A 713-amino-acid polypeptide reads, in one-letter code: Polyribonucleotide nucleotidyltransferase (713 aa).

Residues D493 and D499 each coordinate Mg(2+). Positions 560-619 constitute a KH domain; that stretch reads PRMITIKINPEKIRDVIGKGGSVIRALTEETGTTIDISDDGVVTIASTNSEGMAEAKKRI. The S1 motif domain occupies 629-697; the sequence is GHVYEGTVLK…EKGRVRLSAK (69 aa).

This sequence belongs to the polyribonucleotide nucleotidyltransferase family. It depends on Mg(2+) as a cofactor.

Its subcellular location is the cytoplasm. The catalysed reaction is RNA(n+1) + phosphate = RNA(n) + a ribonucleoside 5'-diphosphate. Functionally, involved in mRNA degradation. Catalyzes the phosphorolysis of single-stranded polyribonucleotides processively in the 3'- to 5'-direction. The chain is Polyribonucleotide nucleotidyltransferase from Burkholderia mallei (strain NCTC 10247).